Here is a 248-residue protein sequence, read N- to C-terminus: PF03932 family protein CutC (248 aa).

Belongs to the CutC family. Homodimer.

The protein resides in the cytoplasm. This is PF03932 family protein CutC from Escherichia coli O127:H6 (strain E2348/69 / EPEC).